The sequence spans 469 residues: ATP-dependent protease ATPase subunit HslU (469 aa).

ATP-binding positions include Ile24, 66–71 (GVGKTE), Asp282, Glu347, and Arg419.

The protein belongs to the ClpX chaperone family. HslU subfamily. A double ring-shaped homohexamer of HslV is capped on each side by a ring-shaped HslU homohexamer. The assembly of the HslU/HslV complex is dependent on binding of ATP.

It localises to the cytoplasm. In terms of biological role, ATPase subunit of a proteasome-like degradation complex; this subunit has chaperone activity. The binding of ATP and its subsequent hydrolysis by HslU are essential for unfolding of protein substrates subsequently hydrolyzed by HslV. HslU recognizes the N-terminal part of its protein substrates and unfolds these before they are guided to HslV for hydrolysis. The chain is ATP-dependent protease ATPase subunit HslU from Listeria monocytogenes serotype 4b (strain CLIP80459).